We begin with the raw amino-acid sequence, 328 residues long: G2/mitotic-specific cyclin-2 (328 aa).

Belongs to the cyclin family. Cyclin AB subfamily. Interacts with the CDC2 protein kinase to form a serine/threonine kinase holoenzyme complex also known as maturation promoting factor (MPF). The cyclin subunit imparts substrate specificity to the complex. In terms of tissue distribution, only expressed in organs with dividing cells.

Functionally, essential for the control of the cell cycle at the G2/M (mitosis) transition. The polypeptide is G2/mitotic-specific cyclin-2 (Medicago sativa (Alfalfa)).